Here is a 1241-residue protein sequence, read N- to C-terminus: DNA-directed RNA polymerase subunit beta (1241 aa).

Residues 1195 to 1219 (PQDVQENVSGENVDAGYENEDVDID) are disordered.

This sequence belongs to the RNA polymerase beta chain family. The RNAP catalytic core consists of 2 alpha, 1 beta, 1 beta' and 1 omega subunit. When a sigma factor is associated with the core the holoenzyme is formed, which can initiate transcription.

It catalyses the reaction RNA(n) + a ribonucleoside 5'-triphosphate = RNA(n+1) + diphosphate. DNA-dependent RNA polymerase catalyzes the transcription of DNA into RNA using the four ribonucleoside triphosphates as substrates. The polypeptide is DNA-directed RNA polymerase subunit beta (Clostridium acetobutylicum (strain ATCC 824 / DSM 792 / JCM 1419 / IAM 19013 / LMG 5710 / NBRC 13948 / NRRL B-527 / VKM B-1787 / 2291 / W)).